Here is a 192-residue protein sequence, read N- to C-terminus: NADH-quinone oxidoreductase subunit B (192 aa).

Positions 71, 72, 136, and 166 each coordinate [4Fe-4S] cluster.

It belongs to the complex I 20 kDa subunit family. As to quaternary structure, NDH-1 is composed of 14 different subunits. Subunits NuoB, C, D, E, F, and G constitute the peripheral sector of the complex. It depends on [4Fe-4S] cluster as a cofactor.

The protein localises to the cell inner membrane. The enzyme catalyses a quinone + NADH + 5 H(+)(in) = a quinol + NAD(+) + 4 H(+)(out). In terms of biological role, NDH-1 shuttles electrons from NADH, via FMN and iron-sulfur (Fe-S) centers, to quinones in the respiratory chain. Couples the redox reaction to proton translocation (for every two electrons transferred, four hydrogen ions are translocated across the cytoplasmic membrane), and thus conserves the redox energy in a proton gradient. This Azorhizobium caulinodans (strain ATCC 43989 / DSM 5975 / JCM 20966 / LMG 6465 / NBRC 14845 / NCIMB 13405 / ORS 571) protein is NADH-quinone oxidoreductase subunit B.